The primary structure comprises 272 residues: Phosphate import ATP-binding protein PstB (272 aa).

The ABC transporter domain maps to 26–267; sequence LEIRNLDLRY…PKKRKTEDYI (242 aa). 58 to 65 contributes to the ATP binding site; that stretch reads GPSGCGKS.

Belongs to the ABC transporter superfamily. Phosphate importer (TC 3.A.1.7) family. In terms of assembly, the complex is composed of two ATP-binding proteins (PstB), two transmembrane proteins (PstC and PstA) and a solute-binding protein (PstS).

Its subcellular location is the cell inner membrane. It catalyses the reaction phosphate(out) + ATP + H2O = ADP + 2 phosphate(in) + H(+). In terms of biological role, part of the ABC transporter complex PstSACB involved in phosphate import. Responsible for energy coupling to the transport system. The chain is Phosphate import ATP-binding protein PstB from Shewanella frigidimarina (strain NCIMB 400).